The sequence spans 511 residues: Probable DNA ligase (511 aa).

Glutamate 208 provides a ligand contact to ATP. The active-site N6-AMP-lysine intermediate is the lysine 210. 6 residues coordinate ATP: arginine 215, arginine 230, glutamate 259, phenylalanine 299, arginine 377, and lysine 383.

It belongs to the ATP-dependent DNA ligase family. It depends on Mg(2+) as a cofactor.

It catalyses the reaction ATP + (deoxyribonucleotide)n-3'-hydroxyl + 5'-phospho-(deoxyribonucleotide)m = (deoxyribonucleotide)n+m + AMP + diphosphate.. In terms of biological role, DNA ligase that seals nicks in double-stranded DNA during DNA replication, DNA recombination and DNA repair. This is Probable DNA ligase from Streptomyces griseus subsp. griseus (strain JCM 4626 / CBS 651.72 / NBRC 13350 / KCC S-0626 / ISP 5235).